Here is a 151-residue protein sequence, read N- to C-terminus: Ubiquitin-conjugating enzyme E2 N (151 aa).

The UBC core domain maps to 3–149 (SLPRRIIKET…AREWTQKYAV (147 aa)). The active-site Glycyl thioester intermediate is cysteine 87.

It belongs to the ubiquitin-conjugating enzyme family.

The enzyme catalyses S-ubiquitinyl-[E1 ubiquitin-activating enzyme]-L-cysteine + [E2 ubiquitin-conjugating enzyme]-L-cysteine = [E1 ubiquitin-activating enzyme]-L-cysteine + S-ubiquitinyl-[E2 ubiquitin-conjugating enzyme]-L-cysteine.. The protein operates within protein modification; protein ubiquitination. Catalyzes the covalent attachment of ubiquitin to other proteins. The protein is Ubiquitin-conjugating enzyme E2 N (ben) of Drosophila melanogaster (Fruit fly).